Reading from the N-terminus, the 54-residue chain is uncharacterized protein (54 aa).

This is an uncharacterized protein from Dictyostelium discoideum (Social amoeba).